The chain runs to 220 residues: Small ribosomal subunit protein uS3 (220 aa).

The 70-residue stretch at 24 to 93 folds into the KH type-2 domain; sequence IKEFLEYRLS…NPQIDVIDVS (70 aa).

It belongs to the universal ribosomal protein uS3 family. In terms of assembly, part of the 30S ribosomal subunit.

Its function is as follows. Binds the lower part of the 30S subunit head. This Pyrobaculum arsenaticum (strain DSM 13514 / JCM 11321 / PZ6) protein is Small ribosomal subunit protein uS3.